The primary structure comprises 364 residues: UDP-N-acetylglucosamine--N-acetylmuramyl-(pentapeptide) pyrophosphoryl-undecaprenol N-acetylglucosamine transferase (364 aa).

UDP-N-acetyl-alpha-D-glucosamine is bound by residues 15–17 (TGG), asparagine 123, arginine 164, serine 191, and glutamine 286.

Belongs to the glycosyltransferase 28 family. MurG subfamily.

The protein resides in the cell inner membrane. It carries out the reaction di-trans,octa-cis-undecaprenyl diphospho-N-acetyl-alpha-D-muramoyl-L-alanyl-D-glutamyl-meso-2,6-diaminopimeloyl-D-alanyl-D-alanine + UDP-N-acetyl-alpha-D-glucosamine = di-trans,octa-cis-undecaprenyl diphospho-[N-acetyl-alpha-D-glucosaminyl-(1-&gt;4)]-N-acetyl-alpha-D-muramoyl-L-alanyl-D-glutamyl-meso-2,6-diaminopimeloyl-D-alanyl-D-alanine + UDP + H(+). It functions in the pathway cell wall biogenesis; peptidoglycan biosynthesis. Its function is as follows. Cell wall formation. Catalyzes the transfer of a GlcNAc subunit on undecaprenyl-pyrophosphoryl-MurNAc-pentapeptide (lipid intermediate I) to form undecaprenyl-pyrophosphoryl-MurNAc-(pentapeptide)GlcNAc (lipid intermediate II). This Prochlorococcus marinus subsp. pastoris (strain CCMP1986 / NIES-2087 / MED4) protein is UDP-N-acetylglucosamine--N-acetylmuramyl-(pentapeptide) pyrophosphoryl-undecaprenol N-acetylglucosamine transferase.